A 91-amino-acid polypeptide reads, in one-letter code: Alpha-defensin-related sequence 2 (91 aa).

The N-terminal stretch at 1–19 is a signal peptide; sequence MKKLVLLFALVLLAFQVQA. Positions 20–58 are excised as a propeptide; sequence DSIQNTDEETKTEEQPGEKDQAVSVSFGDPQGSALQDAA. The segment at 22–48 is disordered; sequence IQNTDEETKTEEQPGEKDQAVSVSFGD. Over residues 27-40 the composition is skewed to basic and acidic residues; sequence EETKTEEQPGEKDQ. A run of 7 repeats spans residues 65–67, 68–70, 71–73, 74–76, 77–79, 80–82, and 83–85. A 7 X 3 AA tandem repeats of C-P-X region spans residues 65 to 85; it reads CPQCPRCPSCPSCPRCPRCPR.

This sequence belongs to the alpha-defensin family. In terms of tissue distribution, small bowel, spleen, colon, kidney, liver, stomach and femur marrow.

Its subcellular location is the secreted. Functionally, apparent precursor of a secreted, cationic, proline- and cysteine-rich peptide that contains Cys-Pro-Xaa repeats. Unlike cryptdin, the proposed mature peptide region lacks the structural motif characteristic of defensins. It may have microbicidal activities. The sequence is that of Alpha-defensin-related sequence 2 (Defa-rs2) from Mus musculus (Mouse).